A 449-amino-acid chain; its full sequence is 4-aminobutyrate aminotransferase (449 aa).

K294 is subject to N6-(pyridoxal phosphate)lysine.

The protein belongs to the class-III pyridoxal-phosphate-dependent aminotransferase family. The cofactor is pyridoxal 5'-phosphate.

The enzyme catalyses 4-aminobutanoate + 2-oxoglutarate = succinate semialdehyde + L-glutamate. It catalyses the reaction (S)-3-amino-2-methylpropanoate + 2-oxoglutarate = 2-methyl-3-oxopropanoate + L-glutamate. It participates in amino-acid degradation; 4-aminobutanoate degradation. This chain is 4-aminobutyrate aminotransferase (gabT), found in Mycobacterium bovis (strain ATCC BAA-935 / AF2122/97).